A 118-amino-acid chain; its full sequence is Large ribosomal subunit protein uL18 (118 aa).

The interval 1–24 is disordered; it reads MITKPDKNKIRQKRHRRVRGKLSG. Positions 10–20 are enriched in basic residues; that stretch reads IRQKRHRRVRG.

The protein belongs to the universal ribosomal protein uL18 family. Part of the 50S ribosomal subunit; part of the 5S rRNA/L5/L18/L25 subcomplex. Contacts the 5S and 23S rRNAs.

In terms of biological role, this is one of the proteins that bind and probably mediate the attachment of the 5S RNA into the large ribosomal subunit, where it forms part of the central protuberance. The sequence is that of Large ribosomal subunit protein uL18 from Streptococcus sanguinis (strain SK36).